Reading from the N-terminus, the 160-residue chain is Endoribonuclease YbeY (160 aa).

3 residues coordinate Zn(2+): His125, His129, and His135.

It belongs to the endoribonuclease YbeY family. Zn(2+) is required as a cofactor.

It is found in the cytoplasm. Functionally, single strand-specific metallo-endoribonuclease involved in late-stage 70S ribosome quality control and in maturation of the 3' terminus of the 16S rRNA. The sequence is that of Endoribonuclease YbeY from Leuconostoc mesenteroides subsp. mesenteroides (strain ATCC 8293 / DSM 20343 / BCRC 11652 / CCM 1803 / JCM 6124 / NCDO 523 / NBRC 100496 / NCIMB 8023 / NCTC 12954 / NRRL B-1118 / 37Y).